Reading from the N-terminus, the 1713-residue chain is uncharacterized protein (1713 aa).

A compositionally biased stretch (polar residues) spans 1–12 (MNENEFSTNSLI). 7 disordered regions span residues 1–35 (MNEN…INFG), 79–200 (QQLN…KLSN), 226–290 (GNNN…QPLS), 309–557 (QYLS…PMSH), 713–734 (SNDQ…KKDR), 808–952 (SPPM…SITT), and 1143–1190 (HHHH…SISR). Low complexity-rich tracts occupy residues 13-35 (NQQG…INFG), 79-109 (QQLN…NNNN), 126-170 (NNSG…NSGN), 177-200 (NMSD…KLSN), and 226-264 (GNNN…GGNN). The segment covering 265–276 (SHHHHNHSHHNS) has biased composition (basic residues). Low complexity-rich tracts occupy residues 317–470 (NNIN…SPAS) and 478–489 (SNNFGGNHNNYN). Residues 490 to 504 (HAHHSHHNNHAHHNT) show a composition bias toward basic residues. Residues 505–553 (HNYNNNNNNNNNNNNNNNNNNNNSNNSNNNSNTNNNGNNGNNSNNNNNH) are compositionally biased toward low complexity. The NDT80 DNA-binding region spans 544 to 825 (GNNSNNNNNH…QNPGRFLNHD (282 aa)). Residues 822-832 (LNHDKSLKKDP) are compositionally biased toward basic and acidic residues. Residues 838 to 874 (GGKGGGGSGSGGMGGGMGGGMGNNGSSGSSSNGGYGN) show a composition bias toward gly residues. 2 stretches are compositionally biased toward low complexity: residues 898–946 (SPTT…PTLT) and 1148–1189 (QQQQ…SSIS). The 116-residue stretch at 1240 to 1355 (SDQRIKSNIR…RSLKKEKDHI (116 aa)) folds into the Peptidase S74 domain. 3 helical membrane passes run 1416-1436 (TMFV…FYLF), 1447-1467 (LMNF…TFYV), and 1473-1493 (LIIA…VGFF). The segment covering 1596–1605 (NSNNNINNNN) has biased composition (low complexity). 2 disordered regions span residues 1596–1634 (NSNN…DFHE) and 1646–1665 (IKGK…SSSN). The segment covering 1617–1634 (FIDDFKKSSSNNHKDFHE) has biased composition (basic and acidic residues).

Its subcellular location is the membrane. This is an uncharacterized protein from Dictyostelium discoideum (Social amoeba).